Reading from the N-terminus, the 457-residue chain is Multidrug resistance protein MdtK (457 aa).

A run of 12 helical transmembrane segments spans residues 11 to 31, 53 to 73, 93 to 113, 127 to 147, 160 to 180, 189 to 209, 243 to 263, 276 to 296, 314 to 334, 350 to 370, 387 to 407, and 418 to 438; these read LLAL…MGFV, IWLP…PVIA, WLAG…GYII, AVGY…FQVA, GMVM…IFIY, GGVG…LAMV, LPIA…ALLV, IALN…AAVT, AART…IFTV, VVTL…SDSI, IFYI…YILA, and PAGF…MMML.

It belongs to the multi antimicrobial extrusion (MATE) (TC 2.A.66.1) family. MdtK subfamily.

It is found in the cell inner membrane. Functionally, multidrug efflux pump that functions probably as a Na(+)/drug antiporter. The chain is Multidrug resistance protein MdtK from Escherichia coli O139:H28 (strain E24377A / ETEC).